The sequence spans 355 residues: MTHPRTALVMAGGTGGHIFPGLAVAEELRARGWKVHWLGTPGSMESRIVPPQGFAFEPIDFSGVRGKGLATLALLPLRLLRAFWQALAVVRRVQPDVVVGLGGYVTFPGGMMAVLCGKPLVVHEQNSVAGLVNKVLAGVADRVFTAFPGALRKGAWVGNPLRTAFTRQADPQARFAGRGGPLRLLVVGGSLGAKALNDIVPQALALIPAERRPVVTHQSGTAQIDALRANYAAAGVEATLTPFIDDTATAFAEADLIVCRAGASTVTEIAAVGAAAVFVPFPHAVDDHQTANARFLADAGGGWLVQQRDLSAEALAQLLQNTEREALLERALKAKTMQKIHATREVANACEELTA.

Residues 14–16 (TGG), asparagine 126, arginine 162, serine 190, isoleucine 244, and glutamine 289 contribute to the UDP-N-acetyl-alpha-D-glucosamine site.

Belongs to the glycosyltransferase 28 family. MurG subfamily.

It is found in the cell inner membrane. It carries out the reaction di-trans,octa-cis-undecaprenyl diphospho-N-acetyl-alpha-D-muramoyl-L-alanyl-D-glutamyl-meso-2,6-diaminopimeloyl-D-alanyl-D-alanine + UDP-N-acetyl-alpha-D-glucosamine = di-trans,octa-cis-undecaprenyl diphospho-[N-acetyl-alpha-D-glucosaminyl-(1-&gt;4)]-N-acetyl-alpha-D-muramoyl-L-alanyl-D-glutamyl-meso-2,6-diaminopimeloyl-D-alanyl-D-alanine + UDP + H(+). Its pathway is cell wall biogenesis; peptidoglycan biosynthesis. Its function is as follows. Cell wall formation. Catalyzes the transfer of a GlcNAc subunit on undecaprenyl-pyrophosphoryl-MurNAc-pentapeptide (lipid intermediate I) to form undecaprenyl-pyrophosphoryl-MurNAc-(pentapeptide)GlcNAc (lipid intermediate II). The sequence is that of UDP-N-acetylglucosamine--N-acetylmuramyl-(pentapeptide) pyrophosphoryl-undecaprenol N-acetylglucosamine transferase from Paracidovorax citrulli (strain AAC00-1) (Acidovorax citrulli).